Here is a 236-residue protein sequence, read N- to C-terminus: Uridylate kinase (236 aa).

Residue 10 to 13 (KLSG) coordinates ATP. A UMP-binding site is contributed by G52. 2 residues coordinate ATP: G53 and R57. UMP-binding positions include D72 and 133–140 (TGNPFFTT). ATP is bound by residues T160, Y166, and D169.

It belongs to the UMP kinase family. As to quaternary structure, homohexamer.

The protein resides in the cytoplasm. The enzyme catalyses UMP + ATP = UDP + ADP. The protein operates within pyrimidine metabolism; CTP biosynthesis via de novo pathway; UDP from UMP (UMPK route): step 1/1. Inhibited by UTP. Functionally, catalyzes the reversible phosphorylation of UMP to UDP. This is Uridylate kinase from Cupriavidus metallidurans (strain ATCC 43123 / DSM 2839 / NBRC 102507 / CH34) (Ralstonia metallidurans).